Reading from the N-terminus, the 1313-residue chain is Inactive protein tyrosine kinase pTKL (1313 aa).

2 MORN repeats span residues 20–42 (YAGDLNVDNLPHGRGLMLYENGN) and 45–63 (FGHFINGKKHGKGIYIDKN). Residues Asn-63, Asn-131, Asn-178, Asn-208, Asn-254, Asn-260, and Asn-288 are each glycosylated (N-linked (GlcNAc...) asparagine). The SAM domain occupies 300 to 365 (WNKEQVAQWL…LQLIKNLRVT (66 aa)). 5 N-linked (GlcNAc...) asparagine glycosylation sites follow: Asn-466, Asn-516, Asn-525, Asn-528, and Asn-534. Over residues 569–580 (EPIKPNKEKEEN) the composition is skewed to basic and acidic residues. A disordered region spans residues 569–631 (EPIKPNKEKE…SEKSSETSSE (63 aa)). The span at 586 to 604 (PIINSKNETNLLNDSNPTK) shows a compositional bias: polar residues. N-linked (GlcNAc...) asparagine glycosylation is found at Asn-592, Asn-598, Asn-661, Asn-678, Asn-729, Asn-735, and Asn-749. Lys-782 provides a ligand contact to ATP. 5 N-linked (GlcNAc...) asparagine glycosylation sites follow: Asn-790, Asn-868, Asn-940, Asn-983, and Asn-1000. The Protein kinase domain maps to 962 to 1294 (FRNKNNILCG…FDRILIEISM (333 aa)). Residues 1052–1055 (KILF) carry the RVxF motif motif. Asn-1191 and Asn-1198 each carry an N-linked (GlcNAc...) asparagine glycan.

Belongs to the protein kinase superfamily. TKL Ser/Thr protein kinase family.

Its subcellular location is the parasitophorous vacuole. It localises to the host cell membrane. It is found in the host cytoplasm. The protein resides in the host cytoskeleton. The sequence is that of Inactive protein tyrosine kinase pTKL from Plasmodium berghei (strain Anka).